A 274-amino-acid chain; its full sequence is Thiamine kinase (274 aa).

This sequence belongs to the thiamine kinase family.

The catalysed reaction is thiamine + ATP = thiamine phosphate + ADP + H(+). It functions in the pathway cofactor biosynthesis; thiamine diphosphate biosynthesis; thiamine phosphate from thiamine: step 1/1. Functionally, catalyzes the ATP-dependent phosphorylation of thiamine to thiamine phosphate. Is involved in thiamine salvage. This Escherichia coli (strain K12 / MC4100 / BW2952) protein is Thiamine kinase.